A 141-amino-acid chain; its full sequence is Lutropin subunit beta (141 aa).

Positions 1–20 are cleaved as a signal peptide; the sequence is MEMFQGLLLWLLLNTGGAWA. 6 disulfide bridges follow: Cys-29-Cys-77, Cys-43-Cys-92, Cys-46-Cys-130, Cys-54-Cys-108, Cys-58-Cys-110, and Cys-113-Cys-120. A glycan (N-linked (GlcNAc...) asparagine) is linked at Asn-33.

It belongs to the glycoprotein hormones subunit beta family. As to quaternary structure, heterodimer of a common alpha chain and a unique beta chain which confers biological specificity to thyrotropin, lutropin, follitropin and gonadotropin.

It localises to the secreted. Functionally, promotes spermatogenesis and ovulation by stimulating the testes and ovaries to synthesize steroids. The protein is Lutropin subunit beta (LHB) of Ailuropoda melanoleuca (Giant panda).